Here is a 209-residue protein sequence, read N- to C-terminus: 3-demethoxyubiquinol 3-hydroxylase (209 aa).

Fe cation contacts are provided by Glu-58, Glu-88, His-91, Glu-140, Glu-172, and His-175.

It belongs to the COQ7 family. It depends on Fe cation as a cofactor.

Its subcellular location is the cell membrane. It carries out the reaction a 5-methoxy-2-methyl-3-(all-trans-polyprenyl)benzene-1,4-diol + AH2 + O2 = a 3-demethylubiquinol + A + H2O. It functions in the pathway cofactor biosynthesis; ubiquinone biosynthesis. Catalyzes the hydroxylation of 2-nonaprenyl-3-methyl-6-methoxy-1,4-benzoquinol during ubiquinone biosynthesis. In Polaromonas naphthalenivorans (strain CJ2), this protein is 3-demethoxyubiquinol 3-hydroxylase.